Reading from the N-terminus, the 724-residue chain is Probable zinc transporter MSC2 (724 aa).

Residues 1-6 (MNLQEL) are Cytoplasmic-facing. The helical transmembrane segment at 7–27 (LAKVPLLLSYPTIILSSNLIV) threads the bilayer. Residues 28–58 (PSHNDLISRAASTSAAEYADEKLIFFSTDHA) lie on the Lumenal side of the membrane. The chain crosses the membrane as a helical span at residues 59–79 (IRLIFLPTFVASSFNLFAHYF). Over 80 to 90 (NFINYSSRRKY) the chain is Cytoplasmic. Residues 91–111 (YVLFTAIYFLSILTAIFHPIQ) traverse the membrane as a helical segment. Over 112 to 134 (STCITLLIIKLLTTADESSPKIA) the chain is Lumenal. Residues 135–155 (LNFKTILKTFVPFITLTLVIL) form a helical membrane-spanning segment. The Cytoplasmic segment spans residues 156–174 (RWDPSFDASSGDVNKISTS). The helical transmembrane segment at 175–195 (LAAYALLILTLRYASPLILST) threads the bilayer. Residues 196–219 (LSSSIGVVSKDTSVAQHSISRNKR) are Lumenal-facing. Residues 220-240 (FPLILVLPIFSFVLLYLMTIV) traverse the membrane as a helical segment. At 241–244 (NKTY) the chain is on the cytoplasmic side. A helical membrane pass occupies residues 245-265 (NIQLLMVFVFFGCLSIFFLSL). Over 266-298 (KDLFTEDGNQKKGGQEDEYCRMFDIKYMISYLW) the chain is Lumenal. Residues 299-319 (LTRFTILLTGIMAIVVHFLSF) form a helical membrane-spanning segment. The Cytoplasmic portion of the chain corresponds to 320–386 (NEITSSIKTD…KQMALNKDTR (67 aa)). Residues 387–407 (SIFSFLLLNTAFMFVQLLYSF) form a helical membrane-spanning segment. At 408 to 417 (RSKSLGLLSD) the chain is on the lumenal side. A helical membrane pass occupies residues 418–438 (SLHMALDCTSLLLGLIAGVLT). At 439-453 (KKPASDKFPFGLNYL) the chain is on the cytoplasmic side. A helical transmembrane segment spans residues 454 to 474 (GTLAGFTNGVLLLGIVCGIFV). Residues 475–491 (EAIERIFNPIHLHATNE) are Lumenal-facing. The helical transmembrane segment at 492-512 (LLVVATLGLLVNLVGLFAFDH) threads the bilayer. Residues 513 to 528 (GAHDHGGTDNENMKGI) are Cytoplasmic-facing. The helical transmembrane segment at 529 to 549 (FLHILADTLGSVGVVISTLLI) threads the bilayer. The Lumenal portion of the chain corresponds to 550–563 (KLTHWPIFDPIASL). The helical transmembrane segment at 564-584 (LIGSLILLSALPLLKSTSANI) threads the bilayer. Residues 585-724 (LLRLDDKKHN…NSLPLQPIAN (140 aa)) are Cytoplasmic-facing. Positions 614–653 (TPRFWPTESGSSGHSHAHTHSHAENHSHEHHHDQKNGSQE) are disordered. Over residues 634-648 (SHAENHSHEHHHDQK) the composition is skewed to basic and acidic residues.

This sequence belongs to the cation diffusion facilitator (CDF) transporter (TC 2.A.4) family. SLC30A subfamily.

It localises to the endoplasmic reticulum membrane. The protein resides in the nucleus membrane. In terms of biological role, probably act as a zinc ion transporter moving zinc from the nucleus/endoplasmic reticulum to the cytoplasm. Involved in zinc ion homeostasis and cellular distribution. This is Probable zinc transporter MSC2 (MSC2) from Saccharomyces cerevisiae (strain ATCC 204508 / S288c) (Baker's yeast).